The following is an 86-amino-acid chain: Protein IDA-LIKE 1 (86 aa).

The N-terminal stretch at 1–27 (MNLSHKTMFMTLYIVFLLIFGSYNATA) is a signal peptide.

Expressed in roots.

It is found in the secreted. The protein localises to the extracellular space. Functionally, involved in an ethylene-independent separation step of floral abscission. May act with RLK5 and HSL2 as ligand-receptor pairs. In Arabidopsis thaliana (Mouse-ear cress), this protein is Protein IDA-LIKE 1 (IDL1).